A 232-amino-acid chain; its full sequence is Small ribosomal subunit protein uS3 (232 aa).

A KH type-2 domain is found at 39–107; that stretch reads VRQFLIKELA…PAQINIAEVR (69 aa).

This sequence belongs to the universal ribosomal protein uS3 family. In terms of assembly, part of the 30S ribosomal subunit. Forms a tight complex with proteins S10 and S14.

Binds the lower part of the 30S subunit head. Binds mRNA in the 70S ribosome, positioning it for translation. This is Small ribosomal subunit protein uS3 from Serratia proteamaculans (strain 568).